A 122-amino-acid chain; its full sequence is uncharacterized protein (122 aa).

An N-terminal signal peptide occupies residues 1–20 (MGFHFCIWIIFLLPPPCKKC).

It is found in the secreted. This is an uncharacterized protein from Homo sapiens (Human).